Reading from the N-terminus, the 161-residue chain is Extracellular giant hemoglobin major globin subunit B1 (161 aa).

The first 16 residues, Met-1 to Ala-16, serve as a signal peptide directing secretion. The Globin domain maps to Cys-18–Leu-161. A disulfide bridge connects residues Cys-19 and Cys-149. A heme b-binding site is contributed by His-112.

The protein belongs to the globin family. As to quaternary structure, the 400 kDa hemoglobin consists of a spherical 24-mer arranged as a double layer of dome-shaped dodecamers. Each dodecamer is composed of the 3-fold trimer of the tetramer A1-A2-B1-B2 having one intra-tetramer (A1-B2) disulfide bond and one inter-tetramer (B1-B2) disulfide bond per tetramer.

Its subcellular location is the secreted. In terms of biological role, the extracellular giant hemoglobin is able to bind and transport oxygen and sulfide simultaneously and reversibly at two different sites. This chain is Extracellular giant hemoglobin major globin subunit B1 (ghbB1), found in Oligobrachia mashikoi (Beard worm).